Reading from the N-terminus, the 152-residue chain is Xanthine-guanine phosphoribosyltransferase (152 aa).

Residues 37-38 and 88-96 each bind 5-phospho-alpha-D-ribose 1-diphosphate; these read RG and DDLVDTGNT. Residue D89 coordinates Mg(2+). 2 residues coordinate guanine: D92 and I135. Xanthine-binding residues include D92 and I135. Residues 92–96 and 134–135 contribute to the GMP site; these read DTGNT and WI.

It belongs to the purine/pyrimidine phosphoribosyltransferase family. XGPT subfamily. Homotetramer. Mg(2+) is required as a cofactor.

The protein localises to the cell inner membrane. The enzyme catalyses GMP + diphosphate = guanine + 5-phospho-alpha-D-ribose 1-diphosphate. It catalyses the reaction XMP + diphosphate = xanthine + 5-phospho-alpha-D-ribose 1-diphosphate. It carries out the reaction IMP + diphosphate = hypoxanthine + 5-phospho-alpha-D-ribose 1-diphosphate. Its pathway is purine metabolism; GMP biosynthesis via salvage pathway; GMP from guanine: step 1/1. It functions in the pathway purine metabolism; XMP biosynthesis via salvage pathway; XMP from xanthine: step 1/1. In terms of biological role, purine salvage pathway enzyme that catalyzes the transfer of the ribosyl-5-phosphate group from 5-phospho-alpha-D-ribose 1-diphosphate (PRPP) to the N9 position of the 6-oxopurines guanine and xanthine to form the corresponding ribonucleotides GMP (guanosine 5'-monophosphate) and XMP (xanthosine 5'-monophosphate), with the release of PPi. To a lesser extent, also acts on hypoxanthine. The sequence is that of Xanthine-guanine phosphoribosyltransferase from Actinobacillus succinogenes (strain ATCC 55618 / DSM 22257 / CCUG 43843 / 130Z).